The primary structure comprises 142 residues: Natriuretic peptides A (142 aa).

Residues 1 to 23 form the signal peptide; sequence MMLKTVIYTGVLFLICNKVLVRA. Residues 24–112 constitute a propeptide that is removed on maturation; that stretch reads DPLYSPYSSK…RLRDLLMAPR (89 aa). The disordered stretch occupies residues 47-123; it reads DTLGQDEGND…NRGSSGCFGS (77 aa). Basic and acidic residues predominate over residues 77–94; it reads WDRERERQWPASDYKKPQ. An intrachain disulfide couples Cys120 to Cys136.

It belongs to the natriuretic peptide family. In terms of processing, cleaved upon secretion to produce the functional hormone. Expressed in heart atrium and to a lower extent in heart ventricle, but not in brain.

Its subcellular location is the secreted. Its function is as follows. Hormone playing a key role in cardiovascular homeostasis through regulation of natriuresis, diuresis, and vasodilation. Has a cGMP-stimulating activity. The polypeptide is Natriuretic peptides A (nppa) (Acipenser transmontanus (White sturgeon)).